Consider the following 398-residue polypeptide: Phospholipase C (398 aa).

Residues 1 to 28 (MKRKICKALICATLATSLWAGASTKVYA) form the signal peptide. 9 residues coordinate Zn(2+): Trp-29, His-39, Asp-84, His-96, His-154, Asp-158, His-164, His-176, and Glu-180. Positions 29–278 (WDGKIDGTGT…HDVSEGNDPS (250 aa)) constitute a Zn-dependent PLC domain. Positions 275 to 283 (NDPSVGKNV) are linker. In terms of domain architecture, PLAT spans 284–398 (KELVAYISTS…ISGNSTYNIK (115 aa)). 11 residues coordinate Ca(2+): Asp-297, Gly-299, Thr-300, Asp-301, Asp-321, Asn-322, Gly-324, Asn-325, Asp-326, Asp-364, and Ala-365.

It belongs to the bacterial zinc-metallophospholipase C family. Ca(2+) serves as cofactor. Requires Zn(2+) as cofactor.

It localises to the secreted. It carries out the reaction a 1,2-diacyl-sn-glycero-3-phosphocholine + H2O = phosphocholine + a 1,2-diacyl-sn-glycerol + H(+). Functionally, bacterial hemolysins are exotoxins that attack blood cell membranes and cause cell rupture. Constitutes an essential virulence factor in gas gangrene. Binds to eukaryotic membranes where it hydrolyzes both phosphatidylcholine and sphingomyelin. The diacylglycerol produced can activate both the arachidonic acid pathway, leading to modulation of the inflammatory response cascade and thrombosis, and protein kinase C, leading to activation of eukaryotic phospholipases and further membrane damage. Acts on human and mouse erythrocytes, but not on rabbit or horse erythrocytes. The chain is Phospholipase C (plc) from Clostridium perfringens (strain 13 / Type A).